The chain runs to 370 residues: Adaptive-response sensory kinase SasA (370 aa).

Residues 152–365 enclose the Histidine kinase domain; that stretch reads MVAHELRTPL…CFYLTVPVWQ (214 aa). H155 bears the Phosphohistidine; by autocatalysis mark.

As to quaternary structure, homooligomerizes. Interacts with KaiC. Participates in the KaiBC complex, whose core is composed of a KaiC homohexamer and 6 KaiB.

It carries out the reaction ATP + protein L-histidine = ADP + protein N-phospho-L-histidine.. Member of the two-component regulatory system SasA/RpaA involved in genome-wide circadian gene expression. One of several clock output pathways. Participates in the Kai clock protein complex, the main circadian regulator in cyanobacteria, via its interaction with KaiC. KaiC enhances the autophosphorylation activity of SasA, which then transfers its phosphate group to RpaA to activate it. In addition to its output function, recruits fold-shifted KaiB (KaiB(fs)) to KaiC to cooperatively form the KaiB(6):KaiC(6) complex (independent of SasA kinase activity). Required for robustness of the circadian rhythm of gene expression and is involved in clock output, also required for adaptation to light/dark cycles. The chain is Adaptive-response sensory kinase SasA from Prochlorococcus marinus (strain MIT 9303).